We begin with the raw amino-acid sequence, 283 residues long: Elongation factor Ts (283 aa).

An involved in Mg(2+) ion dislocation from EF-Tu region spans residues 79 to 82; sequence TDFV.

This sequence belongs to the EF-Ts family.

The protein localises to the cytoplasm. Functionally, associates with the EF-Tu.GDP complex and induces the exchange of GDP to GTP. It remains bound to the aminoacyl-tRNA.EF-Tu.GTP complex up to the GTP hydrolysis stage on the ribosome. The chain is Elongation factor Ts from Shewanella sp. (strain ANA-3).